Reading from the N-terminus, the 466-residue chain is Coagulation factor IX (466 aa).

Residues M1–G25 form the signal peptide. A propeptide spanning residues A26–R46 is cleaved from the precursor. Y47, N48, E53, E54, E61, E63, E66, E67, E72, E73, and E76 together coordinate Ca(2+). The Gla domain occupies Y47–V92. Residues E53, E54, E61, E63, E66, E67, E72, E73, E76, E79, and E82 each carry the 4-carboxyglutamate modification. A Mg(2+)-binding site is contributed by E61. A disulfide bond links C64 and C69. E66 lines the Mg(2+) pocket. E72 provides a ligand contact to Mg(2+). E76 contributes to the Mg(2+) binding site. E82 contributes to the Ca(2+) binding site. A Mg(2+)-binding site is contributed by E82. T85 carries O-linked (GalNAc...) threonine glycosylation. Residues E86, D93, G94, and Q96 each coordinate Ca(2+). E86 carries the 4-carboxyglutamate modification. E86 is a Mg(2+) binding site. The 37-residue stretch at D93–E129 folds into the EGF-like 1; calcium-binding domain. Cystine bridges form between C97-C108, C102-C117, C119-C128, C134-C145, C141-C155, C157-C170, C178-C340, C257-C273, C387-C401, and C412-C440. An O-linked (Glc...) serine glycan is attached at S99. Ca(2+) is bound by residues D110 and D111. D110 is subject to (3R)-3-hydroxyaspartate. Residue S114 is modified to Phosphoserine. One can recognise an EGF-like 2 domain in the interval L130–E171. A propeptide spans A193–R231 (activation peptide). Y202 carries the sulfotyrosine modification. The residue at position 205 (S205) is a Phosphoserine. Residue T206 is modified to Phosphothreonine; alternate. A glycan (O-linked (GalNAc...) threonine; alternate) is linked at T206. N221 carries N-linked (GlcNAc...) asparagine glycosylation. 2 O-linked (GalNAc...) threonine glycosylation sites follow: T223 and T230. Residues I232 to K464 enclose the Peptidase S1 domain. H272 acts as the Charge relay system in catalysis. Ca(2+) contacts are provided by E286, N288, E291, E293, and E296. D320 functions as the Charge relay system in the catalytic mechanism. S416 (charge relay system) is an active-site residue.

It belongs to the peptidase S1 family. Heterodimer of a light chain and a heavy chain; disulfide-linked. Interacts (inactive and activated) with F11 (activated) in calcium-dependent manner. Interacts with SERPINC1. The iron and 2-oxoglutarate dependent 3-hydroxylation of aspartate and asparagine is (R) stereospecific within EGF domains. In terms of processing, activated by factor XIa, which excises the activation peptide. The propeptide can also be removed by snake venom protease. Activated by coagulation factor VIIa-tissue factor (F7-F3) complex in calcium-dependent manner. Post-translationally, predominantly O-glucosylated at Ser-99 by POGLUT1 in vitro.

The protein localises to the secreted. It catalyses the reaction Selective cleavage of Arg-|-Ile bond in factor X to form factor Xa.. Its function is as follows. Factor IX is a vitamin K-dependent plasma protein that participates in the intrinsic pathway of blood coagulation by converting factor X to its active form in the presence of Ca(2+) ions, phospholipids, and factor VIIIa. This Felis catus (Cat) protein is Coagulation factor IX (F9).